Here is a 385-residue protein sequence, read N- to C-terminus: Leucine aminopeptidase 1 (385 aa).

The signal sequence occupies residues 1–20 (MKFPSLLSLGVAASTTIVAA). Residues 21–87 (VPDQKPIGDI…FPKTFAQTTV (67 aa)) constitute a propeptide that is removed on maturation. N-linked (GlcNAc...) asparagine glycosylation is present at asparagine 177. Residues histidine 185, aspartate 204, glutamate 243, and aspartate 270 each contribute to the Zn(2+) site. A disulfide bond links cysteine 319 and cysteine 323. Residue histidine 352 participates in Zn(2+) binding.

The protein belongs to the peptidase M28 family. M28E subfamily. In terms of assembly, monomer. Zn(2+) serves as cofactor.

The protein resides in the secreted. Its function is as follows. Extracellular aminopeptidase that allows assimilation of proteinaceous substrates. In Ajellomyces capsulatus (strain G186AR / H82 / ATCC MYA-2454 / RMSCC 2432) (Darling's disease fungus), this protein is Leucine aminopeptidase 1 (LAP1).